We begin with the raw amino-acid sequence, 88 residues long: Cytochrome c oxidase subunit 6B2 (88 aa).

The interval 1-22 (MLDVEAQEPPKGKWSTPPFDPR) is disordered. One can recognise a CHCH domain in the interval 29–75 (IRNCYQNFLDYHRCLKTRTRRGKSTQPCEYYFRVYHSLCPISWVESW). Residues 32-42 (CYQNFLDYHRC) carry the Cx9C motif motif. 2 cysteine pairs are disulfide-bonded: Cys-32–Cys-67 and Cys-42–Cys-56. Residues 56-67 (CEYYFRVYHSLC) carry the Cx10C motif motif.

Belongs to the cytochrome c oxidase subunit 6B family. As to quaternary structure, component of the cytochrome c oxidase (complex IV, CIV), a multisubunit enzyme composed of 14 subunits. The complex is composed of a catalytic core of 3 subunits MT-CO1, MT-CO2 and MT-CO3, encoded in the mitochondrial DNA, and 11 supernumerary subunits COX4I1 (or COX4I2), COX5A, COX5B, COX6A1 (or COX6A2), COX6B1 (or COX6B2), COX6C, COX7A2 (or COX7A1), COX7B, COX7C, COX8A and NDUFA4, which are encoded in the nuclear genome. The complex exists as a monomer or a dimer and forms supercomplexes (SCs) in the inner mitochondrial membrane with NADH-ubiquinone oxidoreductase (complex I, CI) and ubiquinol-cytochrome c oxidoreductase (cytochrome b-c1 complex, complex III, CIII), resulting in different assemblies (supercomplex SCI(1)III(2)IV(1) and megacomplex MCI(2)III(2)IV(2)). Testis specific. Weak expression in thymus and heart. Expressed in cancer cell lines.

The protein resides in the mitochondrion inner membrane. Its pathway is energy metabolism; oxidative phosphorylation. In terms of biological role, component of the cytochrome c oxidase, the last enzyme in the mitochondrial electron transport chain which drives oxidative phosphorylation. The respiratory chain contains 3 multisubunit complexes succinate dehydrogenase (complex II, CII), ubiquinol-cytochrome c oxidoreductase (cytochrome b-c1 complex, complex III, CIII) and cytochrome c oxidase (complex IV, CIV), that cooperate to transfer electrons derived from NADH and succinate to molecular oxygen, creating an electrochemical gradient over the inner membrane that drives transmembrane transport and the ATP synthase. Cytochrome c oxidase is the component of the respiratory chain that catalyzes the reduction of oxygen to water. Electrons originating from reduced cytochrome c in the intermembrane space (IMS) are transferred via the dinuclear copper A center (CU(A)) of subunit 2 and heme A of subunit 1 to the active site in subunit 1, a binuclear center (BNC) formed by heme A3 and copper B (CU(B)). The BNC reduces molecular oxygen to 2 water molecules using 4 electrons from cytochrome c in the IMS and 4 protons from the mitochondrial matrix. In Homo sapiens (Human), this protein is Cytochrome c oxidase subunit 6B2 (COX6B2).